A 387-amino-acid polypeptide reads, in one-letter code: MGNSSATEDGGLLAGRGPESLGTGAGLGGAGAAALVGGVLLIGLVLAGNSLVCVSVASERTLQTPTNYFIVSLAAADLLLAVLVLPLFVYSEVQGGVWLLSPRLCDTLMAMDVMLCTASIFNLCAISVDRFVAVTVPLRYNQQGQCQLLLIAATWLLSAAVASPVVCGLNDVPGRDPAVCCLENRDYVVYSSVCSFFLPCPLMLLLYWATFRGLRRWEAARHTKLHSRAPRRPSGPGPPVSDPTQGPFFPDCPPPLPSLRTSPSDSSRPESELSQRPCSPGCLLADAALPQPPEPSSRRRRGAKITGRERKAMRVLPVVVGAFLVCWTPFFVVHITRALCPACFVSPRLVSAVTWLGYVNSALNPIIYTIFNAEFRSVFRKTLRLRC.

The Extracellular portion of the chain corresponds to 1-34 (MGNSSATEDGGLLAGRGPESLGTGAGLGGAGAAA). A glycan (N-linked (GlcNAc...) asparagine) is linked at asparagine 3. Residues 35–57 (LVGGVLLIGLVLAGNSLVCVSVA) traverse the membrane as a helical segment. Topologically, residues 58 to 67 (SERTLQTPTN) are cytoplasmic. A helical membrane pass occupies residues 68-90 (YFIVSLAAADLLLAVLVLPLFVY). Aspartate 77 contributes to the Na(+) binding site. Over 91–106 (SEVQGGVWLLSPRLCD) the chain is Extracellular. Cysteine 105 and cysteine 180 are joined by a disulfide. The helical transmembrane segment at 107–128 (TLMAMDVMLCTASIFNLCAISV) threads the bilayer. Residue serine 119 coordinates Na(+). Over 129–146 (DRFVAVTVPLRYNQQGQC) the chain is Cytoplasmic. A helical membrane pass occupies residues 147-170 (QLLLIAATWLLSAAVASPVVCGLN). Residues 171 to 186 (DVPGRDPAVCCLENRD) are Extracellular-facing. The chain crosses the membrane as a helical span at residues 187–208 (YVVYSSVCSFFLPCPLMLLLYW). The Cytoplasmic segment spans residues 209-314 (ATFRGLRRWE…ITGRERKAMR (106 aa)). Disordered regions lie at residues 224 to 247 (KLHS…TQGP) and 287 to 306 (AALP…AKIT). The chain crosses the membrane as a helical span at residues 315–337 (VLPVVVGAFLVCWTPFFVVHITR). The Extracellular portion of the chain corresponds to 338–346 (ALCPACFVS). An intrachain disulfide couples cysteine 340 to cysteine 343. Residues 347 to 369 (PRLVSAVTWLGYVNSALNPIIYT) traverse the membrane as a helical segment. The Cytoplasmic portion of the chain corresponds to 370-387 (IFNAEFRSVFRKTLRLRC). Residue cysteine 387 is the site of S-palmitoyl cysteine attachment.

This sequence belongs to the G-protein coupled receptor 1 family. As to quaternary structure, forms homo- and heterooligomers with DRD2. D4.7 allele exhibits higher affinity for homodimers compared to DRD2 heterodimers, while alleles D42. and 4.4 have similar affinities for both. The interaction with DRD2 may modulate agonist-induced downstream signaling. Interacts with CLIC6. Interacts with GPRASP1. May interact with ADORA2A. Interacts with KLHL12. Palmitoylated. Palmitoylation of the C-terminal Cys is important for normal expression at the cell membrane. As to expression, detected in olfactory bulb, hypothalamus, olfactory tubercle, brainstem and striatum.

It localises to the cell membrane. Dopamine receptor responsible for neuronal signaling in the mesolimbic system of the brain, an area of the brain that regulates emotion and complex behavior. Activated by dopamine, but also by epinephrine and norepinephrine, and by numerous synthetic agonists and drugs. Agonist binding triggers signaling via G proteins that inhibit adenylyl cyclase. Modulates the circadian rhythm of contrast sensitivity by regulating the rhythmic expression of NPAS2 in the retinal ganglion cells. This Mus musculus (Mouse) protein is D(4) dopamine receptor (Drd4).